A 353-amino-acid polypeptide reads, in one-letter code: MVQRQQTALVGTDDGGIRLSSTETIPNITGDSVLIKTKAVSVNPVDTKMIGPYVTPGAVAGFDFAGVVEMVGPDATKCDIRVGDRVCTAIMGMNPLDPTVGAFAEYTAAVEWILLKIPPNLSFEEGASLGISFMTTGLALFKSLGLPGNPLSPATEKLPVLVYGGSSATGTAAIQLVKLAGFAPITTCSPRNFELVKSYGASAVFDYNDPDCIRDIKKHTKNNIRYALDCISTTQSMQFCYQAIGRAGGKYTALEPFSEAVARTRKMVKPDWIMGPQMLGKEIRWPEPHWRPANAEMGEFGVYWTAVLRKLLDNNLIRPHAIVVREGGLEKVLDGIEDIRAKKISGKKLVFTL.

45–48 provides a ligand contact to NADP(+); that stretch reads VDTK. 131–138 is a binding site for substrate; sequence ISFMTTGL. Residues 166–169, 189–192, Tyr-207, and 254–255 each bind NADP(+); these read SSAT, SPRN, and LE. 275 to 279 is a substrate binding site; sequence GPQML. 344–345 is an NADP(+) binding site; it reads IS.

It belongs to the zinc-containing alcohol dehydrogenase family. As to quaternary structure, monomer.

It carries out the reaction L-serine + 7 malonyl-CoA + acetyl-CoA + 2 S-adenosyl-L-methionine + ATP + 8 NADPH + 11 H(+) = (5S)-3-[(2E,6R,8E,10E,12E)-2,6-dimethyltetradeca-2,8,10,12-tetraenoyl]-5-(hydroxymethyl)pyrrolidine-2,4-dione + AMP + 2 S-adenosyl-L-homocysteine + 7 CO2 + diphosphate + 8 NADP(+) + 8 CoA + 6 H2O. It functions in the pathway mycotoxin biosynthesis. In terms of biological role, trans-enoyl reductase; part of the gene cluster that mediates the biosynthesis of HIV-1 integrase inhibitor equisetin and of fusarisetin A, both trans-fused decalin-containing tetramic acids showing also antimicrobial activity. The PKS module of fsa1 together with the enoylreductase fsa3 catalyze the formation of the polyketide unit which is then conjugated to L-serine by the condensation domain of the fsa1 NRPS module. Activity of the Dieckmann cyclase domain (RED) results in release of the Dieckmann product intermediate. Diels-Alderase fsa2 is involved in endo-selective Diels-Alder cycloaddition to form the decalin ring, leading to the production of N-desmethylequisetin also called trichosetin. Subsequent N-methylation is carried out by fsa4 to give equisetin. The enzymatic gene responsible for the conversion of equisetin to fusarisetin A has not been identified yet and is probably located outside of the fsa cluster. The chain is Trans-enoyl reductase fsa3 from Fusarium sp. (strain FN080326).